We begin with the raw amino-acid sequence, 375 residues long: Platelet-derived growth factor receptor-like protein (375 aa).

A signal peptide spans 1-21; it reads MKFWLLLGLLLLHEALEDVAG. The tract at residues 20–63 is disordered; that stretch reads AGQHSPKNKRPKEQGENRIKPTNKKAKPKIPKVKDRDSTDSTAK. Basic residues predominate over residues 40–50; sequence PTNKKAKPKIP. The region spanning 47–159 is the Ig-like C2-type 1 domain; the sequence is PKIPKVKDRD…GYICRRDEAK (113 aa). Cys-96 and Cys-143 are oxidised to a cystine. N-linked (GlcNAc...) asparagine glycosylation occurs at Asn-219. The Ig-like C2-type 2 domain occupies 272–375; it reads PSTTILASSN…TTVATTVEFS (104 aa). The cysteines at positions 293 and 357 are disulfide-linked.

As to quaternary structure, forms a complex composed of PDGFRL, TNK2 and GRB2.

The protein resides in the secreted. In Mus musculus (Mouse), this protein is Platelet-derived growth factor receptor-like protein (Pdgfrl).